Reading from the N-terminus, the 90-residue chain is Probable Fe(2+)-trafficking protein (90 aa).

It belongs to the Fe(2+)-trafficking protein family. In terms of assembly, monomer.

Its function is as follows. Could be a mediator in iron transactions between iron acquisition and iron-requiring processes, such as synthesis and/or repair of Fe-S clusters in biosynthetic enzymes. The sequence is that of Probable Fe(2+)-trafficking protein from Serratia proteamaculans (strain 568).